We begin with the raw amino-acid sequence, 374 residues long: (R)-phenyllactyl-CoA dehydratase beta subunit (374 aa).

The protein belongs to the FldB/FldC dehydratase alpha/beta subunit family. As to quaternary structure, part of the heterotrimeric phenyllactate dehydratase complex FldABC, composed of (R)-phenyllactate CoA-transferase (FldA) and a heterodimeric (R)-phenyllactyl-CoA dehydratase (FldB and FldC). It depends on [4Fe-4S] cluster as a cofactor. No flavin could be detected in the FldABC complex, and the addition of FAD, FMN or riboflavin to the dehydratase do not increase enzymatic activity. serves as cofactor.

The catalysed reaction is (R)-3-phenyllactoyl-CoA = (E)-cinnamoyl-CoA + H2O. It carries out the reaction (R)-3-(4-hydroxyphenyl)lactoyl-CoA = (E)-4-coumaroyl-CoA + H2O. The enzyme catalyses (R)-3-(indol-3-yl)lactoyl-CoA = (E)-3-(indol-3-yl)acryloyl-CoA + H2O. It participates in amino-acid degradation; L-phenylalanine degradation. In terms of biological role, component of the phenyllactate dehydratase complex FldABC that is involved in the fermentation of L-phenylalanine via a Stickland reaction. This complex catalyzes the reversible syn-dehydration of (R)-phenyllactate to (E)-cinnamate in two steps, a CoA-transfer from cinnamoyl-CoA to phenyllactate, catalyzed by FldA, followed by the dehydration of phenyllactyl-CoA to cinnamoyl-CoA, catalyzed by FldB and FldC. Requires the activator FldI to initiate catalysis. This is (R)-phenyllactyl-CoA dehydratase beta subunit from Clostridium sporogenes.